We begin with the raw amino-acid sequence, 165 residues long: MADFDEIYEEEEDEERALEEQLLKYSPDPVVVRGSGHVTVFGLSNKFESEFPSSLTGKVAPEEFKASINRVNSCLRKNLPVNVRWLLCGCLCCCCTLGCSMWPVICLSKRTRRSIEKLLEWENNRLYHKLCLHWRLSKRKCETNNMMEYVILIEFLPKTPIFRPD.

Residues 1–26 are a coiled coil; that stretch reads MADFDEIYEEEEDEERALEEQLLKYS. Positions 88–106 match the CHIC motif (Cys-rich) motif; the sequence is CGCLCCCCTLGCSMWPVIC.

This sequence belongs to the CHIC family. Post-translationally, palmitoylation in the CHIC motif is required for membrane association.

It is found in the membrane. The protein localises to the golgi apparatus. In Mus musculus (Mouse), this protein is Cysteine-rich hydrophobic domain-containing protein 2 (Chic2).